Reading from the N-terminus, the 390-residue chain is Period circadian protein (390 aa).

Disordered stretches follow at residues 27–120, 164–188, 247–266, and 327–356; these read VTAP…APPV, LEYSGPGPGHGHGIKRGGSHSWEGE, GGNGNVGSGNGNNNQASTNQ, and SPSGTNPSPNRPHKHAHVHSSSEKPSTSQA. Gly residues predominate over residues 93 to 114; that stretch reads GTSGTGNSGDGGGGGGADGTGS. Gly residues predominate over residues 247–256; it reads GGNGNVGSGN.

As to quaternary structure, forms a heterodimer with timeless (TIM); the complex then translocates into the nucleus. Post-translationally, phosphorylated with a circadian rhythmicity, probably by the double-time protein (dbt). Phosphorylation could be implicated in the stability of per monomer and in the formation of heterodimer per-tim.

The protein resides in the nucleus. It is found in the cytoplasm. Its subcellular location is the perinuclear region. Its function is as follows. Essential for biological clock functions. Determines the period length of circadian and ultradian rhythms; an increase in PER dosage leads to shortened circadian rhythms and a decrease leads to lengthened circadian rhythms. Essential for the circadian rhythmicity of locomotor activity, eclosion behavior, and for the rhythmic component of the male courtship song that originates in the thoracic nervous system. The biological cycle depends on the rhythmic formation and nuclear localization of the TIM-PER complex. Light induces the degradation of TIM, which promotes elimination of PER. Nuclear activity of the heterodimer coordinatively regulates PER and TIM transcription through a negative feedback loop. Behaves as a negative element in circadian transcriptional loop. Does not appear to bind DNA, suggesting indirect transcriptional inhibition. The chain is Period circadian protein (per) from Drosophila tropicalis (Fruit fly).